A 241-amino-acid polypeptide reads, in one-letter code: Pyridoxine 5'-phosphate synthase (241 aa).

Asparagine 7 provides a ligand contact to 3-amino-2-oxopropyl phosphate. Residue aspartate 9–histidine 10 coordinates 1-deoxy-D-xylulose 5-phosphate. Residue arginine 18 participates in 3-amino-2-oxopropyl phosphate binding. Catalysis depends on histidine 43, which acts as the Proton acceptor. 1-deoxy-D-xylulose 5-phosphate is bound by residues arginine 45 and histidine 50. Residue glutamate 70 is the Proton acceptor of the active site. A 1-deoxy-D-xylulose 5-phosphate-binding site is contributed by threonine 100. The active-site Proton donor is the histidine 191. 3-amino-2-oxopropyl phosphate is bound by residues glycine 192 and glycine 213–histidine 214.

This sequence belongs to the PNP synthase family. In terms of assembly, homooctamer; tetramer of dimers.

It localises to the cytoplasm. The enzyme catalyses 3-amino-2-oxopropyl phosphate + 1-deoxy-D-xylulose 5-phosphate = pyridoxine 5'-phosphate + phosphate + 2 H2O + H(+). It participates in cofactor biosynthesis; pyridoxine 5'-phosphate biosynthesis; pyridoxine 5'-phosphate from D-erythrose 4-phosphate: step 5/5. Its function is as follows. Catalyzes the complicated ring closure reaction between the two acyclic compounds 1-deoxy-D-xylulose-5-phosphate (DXP) and 3-amino-2-oxopropyl phosphate (1-amino-acetone-3-phosphate or AAP) to form pyridoxine 5'-phosphate (PNP) and inorganic phosphate. The chain is Pyridoxine 5'-phosphate synthase from Maridesulfovibrio salexigens (strain ATCC 14822 / DSM 2638 / NCIMB 8403 / VKM B-1763) (Desulfovibrio salexigens).